The sequence spans 216 residues: Thymidylate kinase (216 aa).

Position 10–17 (10–17 (GVDGSGKT)) interacts with ATP.

Belongs to the thymidylate kinase family.

It catalyses the reaction dTMP + ATP = dTDP + ADP. Phosphorylation of dTMP to form dTDP in both de novo and salvage pathways of dTTP synthesis. This chain is Thymidylate kinase, found in Pelotomaculum thermopropionicum (strain DSM 13744 / JCM 10971 / SI).